The sequence spans 241 residues: Small ribosomal subunit protein uS2 (241 aa).

The protein belongs to the universal ribosomal protein uS2 family.

The sequence is that of Small ribosomal subunit protein uS2 from Pectobacterium atrosepticum (strain SCRI 1043 / ATCC BAA-672) (Erwinia carotovora subsp. atroseptica).